The following is a 152-amino-acid chain: Deoxyuridine 5'-triphosphate nucleotidohydrolase (152 aa).

Residues 72 to 74, asparagine 85, and 89 to 91 each bind substrate; these read RSG and TID.

The protein belongs to the dUTPase family. It depends on Mg(2+) as a cofactor.

The catalysed reaction is dUTP + H2O = dUMP + diphosphate + H(+). It participates in pyrimidine metabolism; dUMP biosynthesis; dUMP from dCTP (dUTP route): step 2/2. Functionally, this enzyme is involved in nucleotide metabolism: it produces dUMP, the immediate precursor of thymidine nucleotides and it decreases the intracellular concentration of dUTP so that uracil cannot be incorporated into DNA. In Rhodopseudomonas palustris (strain BisB5), this protein is Deoxyuridine 5'-triphosphate nucleotidohydrolase.